Here is a 430-residue protein sequence, read N- to C-terminus: 3-phosphoshikimate 1-carboxyvinyltransferase (430 aa).

3-phosphoshikimate contacts are provided by lysine 33, serine 34, and arginine 38. Lysine 33 serves as a coordination point for phosphoenolpyruvate. Residues glycine 101 and arginine 129 each coordinate phosphoenolpyruvate. The 3-phosphoshikimate site is built by serine 172, serine 173, glutamine 174, serine 201, glutamate 319, and histidine 346. Residue glutamine 174 coordinates phosphoenolpyruvate. Glutamate 319 (proton acceptor) is an active-site residue. Phosphoenolpyruvate is bound by residues arginine 350, arginine 391, and lysine 416.

It belongs to the EPSP synthase family. Monomer.

Its subcellular location is the cytoplasm. It carries out the reaction 3-phosphoshikimate + phosphoenolpyruvate = 5-O-(1-carboxyvinyl)-3-phosphoshikimate + phosphate. Its pathway is metabolic intermediate biosynthesis; chorismate biosynthesis; chorismate from D-erythrose 4-phosphate and phosphoenolpyruvate: step 6/7. Catalyzes the transfer of the enolpyruvyl moiety of phosphoenolpyruvate (PEP) to the 5-hydroxyl of shikimate-3-phosphate (S3P) to produce enolpyruvyl shikimate-3-phosphate and inorganic phosphate. The polypeptide is 3-phosphoshikimate 1-carboxyvinyltransferase (Corynebacterium glutamicum (strain ATCC 13032 / DSM 20300 / JCM 1318 / BCRC 11384 / CCUG 27702 / LMG 3730 / NBRC 12168 / NCIMB 10025 / NRRL B-2784 / 534)).